We begin with the raw amino-acid sequence, 89 residues long: Small ribosomal subunit protein uS15 (89 aa).

It belongs to the universal ribosomal protein uS15 family. Part of the 30S ribosomal subunit. Forms a bridge to the 50S subunit in the 70S ribosome, contacting the 23S rRNA.

Its function is as follows. One of the primary rRNA binding proteins, it binds directly to 16S rRNA where it helps nucleate assembly of the platform of the 30S subunit by binding and bridging several RNA helices of the 16S rRNA. In terms of biological role, forms an intersubunit bridge (bridge B4) with the 23S rRNA of the 50S subunit in the ribosome. The chain is Small ribosomal subunit protein uS15 from Chlorobium phaeobacteroides (strain DSM 266 / SMG 266 / 2430).